A 331-amino-acid chain; its full sequence is Pectinesterase (331 aa).

Positions 1-17 (MVKSILASVLFAATALA) are cleaved as a signal peptide. Residue Gln138 participates in substrate binding. The active-site Proton donor is Asp161. Asp182 acts as the Nucleophile in catalysis. Substrate contacts are provided by Arg247 and Trp249.

The protein belongs to the pectinesterase family.

Its subcellular location is the secreted. The enzyme catalyses [(1-&gt;4)-alpha-D-galacturonosyl methyl ester](n) + n H2O = [(1-&gt;4)-alpha-D-galacturonosyl](n) + n methanol + n H(+). It functions in the pathway glycan metabolism; pectin degradation; 2-dehydro-3-deoxy-D-gluconate from pectin: step 1/5. In terms of biological role, involved in maceration and soft-rotting of plant tissue. This chain is Pectinesterase (pme1), found in Aspergillus niger.